The primary structure comprises 469 residues: Aspartyl/glutamyl-tRNA(Asn/Gln) amidotransferase subunit B (469 aa).

This sequence belongs to the GatB/GatE family. GatB subfamily. In terms of assembly, heterotrimer of A, B and C subunits.

It carries out the reaction L-glutamyl-tRNA(Gln) + L-glutamine + ATP + H2O = L-glutaminyl-tRNA(Gln) + L-glutamate + ADP + phosphate + H(+). It catalyses the reaction L-aspartyl-tRNA(Asn) + L-glutamine + ATP + H2O = L-asparaginyl-tRNA(Asn) + L-glutamate + ADP + phosphate + 2 H(+). Its function is as follows. Allows the formation of correctly charged Asn-tRNA(Asn) or Gln-tRNA(Gln) through the transamidation of misacylated Asp-tRNA(Asn) or Glu-tRNA(Gln) in organisms which lack either or both of asparaginyl-tRNA or glutaminyl-tRNA synthetases. The reaction takes place in the presence of glutamine and ATP through an activated phospho-Asp-tRNA(Asn) or phospho-Glu-tRNA(Gln). In Methanococcus maripaludis (strain C7 / ATCC BAA-1331), this protein is Aspartyl/glutamyl-tRNA(Asn/Gln) amidotransferase subunit B.